A 650-amino-acid chain; its full sequence is Chaperone protein DnaK (650 aa).

The residue at position 200 (Thr200) is a Phosphothreonine; by autocatalysis. Low complexity predominate over residues 613–634 (QAGAAGAAGAAAAEGAAQGGAQ). Positions 613 to 637 (QAGAAGAAGAAAAEGAAQGGAQTAD) are disordered.

Belongs to the heat shock protein 70 family.

In terms of biological role, acts as a chaperone. This is Chaperone protein DnaK from Burkholderia thailandensis (strain ATCC 700388 / DSM 13276 / CCUG 48851 / CIP 106301 / E264).